The sequence spans 501 residues: Cytochrome P450 3A31 (501 aa).

Cys-440 contributes to the heme binding site.

The protein belongs to the cytochrome P450 family. It depends on heme as a cofactor. Expressed constitutively in liver.

Its subcellular location is the endoplasmic reticulum membrane. It localises to the microsome membrane. The enzyme catalyses an organic molecule + reduced [NADPH--hemoprotein reductase] + O2 = an alcohol + oxidized [NADPH--hemoprotein reductase] + H2O + H(+). Cytochromes P450 are a group of heme-thiolate monooxygenases. In liver microsomes, this enzyme is involved in an NADPH-dependent electron transport pathway. It oxidizes a variety of structurally unrelated compounds, including steroids, fatty acids, and xenobiotics. The polypeptide is Cytochrome P450 3A31 (CYP3A31) (Mesocricetus auratus (Golden hamster)).